Here is a 422-residue protein sequence, read N- to C-terminus: Histidine--tRNA ligase (422 aa).

This sequence belongs to the class-II aminoacyl-tRNA synthetase family. Homodimer.

Its subcellular location is the cytoplasm. The enzyme catalyses tRNA(His) + L-histidine + ATP = L-histidyl-tRNA(His) + AMP + diphosphate + H(+). The protein is Histidine--tRNA ligase of Lysinibacillus sphaericus (strain C3-41).